The following is a 505-amino-acid chain: Apolipoprotein N-acyltransferase (505 aa).

The next 7 membrane-spanning stretches (helical) occupy residues 6 to 26 (PSIL…CLAF), 29 to 49 (FDIW…ATLV), 53 to 73 (TAML…VQWV), 80 to 100 (FGGV…SYLG), 119 to 139 (FVLA…FTGF), 152 to 172 (PFAQ…VILL), and 189 to 209 (TFTK…LQFV). Residues 223 to 469 (IQANIEQQLK…TNTLTAEIAT (247 aa)) enclose the CN hydrolase domain. E263 functions as the Proton acceptor in the catalytic mechanism. Residue K328 is part of the active site. C379 acts as the Nucleophile in catalysis. Residues 475–495 (LFGQFGHWLIYSLSFICVAFG) traverse the membrane as a helical segment.

This sequence belongs to the CN hydrolase family. Apolipoprotein N-acyltransferase subfamily.

The protein resides in the cell inner membrane. It carries out the reaction N-terminal S-1,2-diacyl-sn-glyceryl-L-cysteinyl-[lipoprotein] + a glycerophospholipid = N-acyl-S-1,2-diacyl-sn-glyceryl-L-cysteinyl-[lipoprotein] + a 2-acyl-sn-glycero-3-phospholipid + H(+). It participates in protein modification; lipoprotein biosynthesis (N-acyl transfer). Catalyzes the phospholipid dependent N-acylation of the N-terminal cysteine of apolipoprotein, the last step in lipoprotein maturation. The protein is Apolipoprotein N-acyltransferase of Haemophilus ducreyi (strain 35000HP / ATCC 700724).